A 213-amino-acid chain; its full sequence is Ribosomal RNA small subunit methyltransferase G (213 aa).

S-adenosyl-L-methionine is bound by residues Gly-72, Phe-77, 125 to 126 (IE), and Arg-141.

It belongs to the methyltransferase superfamily. RNA methyltransferase RsmG family.

Its subcellular location is the cytoplasm. The enzyme catalyses guanosine(527) in 16S rRNA + S-adenosyl-L-methionine = N(7)-methylguanosine(527) in 16S rRNA + S-adenosyl-L-homocysteine. Specifically methylates the N7 position of guanine in position 527 of 16S rRNA. This is Ribosomal RNA small subunit methyltransferase G from Rhizobium meliloti (strain 1021) (Ensifer meliloti).